The following is a 281-amino-acid chain: Elongation factor 1-delta (281 aa).

The residue at position 2 (alanine 2) is an N-acetylalanine. Lysine 17 is modified (N6-acetyllysine). 4 positions are modified to phosphoserine: serine 37, glutamate 40, serine 44, and serine 60. Threonine 73 bears the Phosphothreonine mark. The segment at 80 to 115 is leucine-zipper; the sequence is LVVRIASLEVENQSLRGVVQELQQAISKLEARLNVL. A phosphoserine mark is found at serine 86, asparagine 91, leucine 94, and serine 106. The residue at position 107 (lysine 107) is an N6-acetyllysine. Residue lysine 117 is modified to N6-acetyllysine; alternate. Position 117 is an N6-succinyllysine; alternate (lysine 117). The interval 118–172 is disordered; it reads SSPGHRATAPQTQHVSPMRQVEPPAKKPATPAEDDEDDDIDLFGSDNEEEDKEAA. Position 119 is a phosphoserine (serine 119). Threonine 129 is modified (phosphothreonine). Serine 133 carries the post-translational modification Phosphoserine. Threonine 147 bears the Phosphothreonine mark. Positions 149 to 169 are enriched in acidic residues; the sequence is AEDDEDDDIDLFGSDNEEEDK. A Phosphoserine; by CK2 modification is found at serine 162. Residues 173 to 281 are catalytic (GEF); the sequence is QLREERLRQY…SVDIAAFNKI (109 aa).

Belongs to the EF-1-beta/EF-1-delta family. In terms of assembly, EF-1 is composed of 4 subunits: alpha, beta, delta isoform 1, and gamma. Isoform 2 interacts with HSF1 and NFE2L2. In terms of tissue distribution, isoform 2 is specifically expressed in brain, cerebellum and testis.

Its subcellular location is the nucleus. In terms of biological role, EF-1-beta and EF-1-delta stimulate the exchange of GDP bound to EF-1-alpha to GTP, regenerating EF-1-alpha for another round of transfer of aminoacyl-tRNAs to the ribosome. Functionally, regulates induction of heat-shock-responsive genes through association with heat shock transcription factors and direct DNA-binding at heat shock promoter elements (HSE). The sequence is that of Elongation factor 1-delta (EEF1D) from Homo sapiens (Human).